Here is a 373-residue protein sequence, read N- to C-terminus: WAT1-related protein At4g30420 (373 aa).

10 helical membrane passes run 2–22 (AMTM…ATLV), 29–49 (VFIL…LYLS), 55–75 (IAIS…SLIG), 94–114 (MGSA…FLAG), 125–145 (GLAK…MTLL), 173–193 (WLIG…WLIL), 205–225 (LSLS…VTFF), 244–264 (CLYA…WAIA), 270–290 (FSAL…ALFF), and 294–314 (IYTG…TVLW). 2 consecutive EamA domains span residues 9–135 (CYAG…TILC) and 186–313 (CWSF…YTVL).

This sequence belongs to the drug/metabolite transporter (DMT) superfamily. Plant drug/metabolite exporter (P-DME) (TC 2.A.7.4) family.

Its subcellular location is the membrane. The protein is WAT1-related protein At4g30420 of Arabidopsis thaliana (Mouse-ear cress).